Reading from the N-terminus, the 333-residue chain is Secreted mono- and diacylglycerol lipase 1 (333 aa).

Residues 1-16 (MMLILSILSIIAFAAA) form the signal peptide. Intrachain disulfides connect C56-C268 and C276-C298. The active-site Nucleophile is the S176. Catalysis depends on residues D230 and H288.

The protein belongs to the AB hydrolase superfamily. Lipase family. Class 3 subfamily.

Its subcellular location is the secreted. The enzyme catalyses a monoacylglycerol + H2O = glycerol + a fatty acid + H(+). It catalyses the reaction a diacylglycerol + H2O = a monoacylglycerol + a fatty acid + H(+). Its function is as follows. Secreted mono- and diacylglycerol lipase that allows the use of hydrolyzed lipids as carbon source and might play a role in pathogenicity. Shows lipolytic activity towards olive oil and p-nitrophenylpalmitate. The chain is Secreted mono- and diacylglycerol lipase 1 from Fusarium solani (Filamentous fungus).